Reading from the N-terminus, the 886-residue chain is DNA replication licensing factor mcm2 (886 aa).

Positions 1-12 (MADSSESFNIAT) are enriched in polar residues. Disordered regions lie at residues 1–65 (MADS…MERD), 77–104 (VEGL…MRMR), and 120–151 (LYDS…EDEE). Acidic residues-rich tracts occupy residues 47-58 (VPEEEEDGEELI) and 78-88 (EGLDDEEDVED). The segment covering 95 to 104 (EAAEQSMRMR) has biased composition (basic and acidic residues). The segment at 314–340 (CNKCNFILGPFFQSQNQEVRPGSCPEC) adopts a C4-type zinc-finger fold. An MCM domain is found at 458-665 (IGERIFASIA…QDEMLARFVV (208 aa)). Positions 515 and 516 each coordinate ADP. Residues 640–643 (SRFD) carry the Arginine finger motif.

The protein belongs to the MCM family. Component of the mcm2-7 complex (RLF-M). The complex forms a toroidal hexameric ring with the proposed subunit order mcm2-mcm6-mcm4-mcm7-mcm3-mcm5. Component of the replisome complex. Component of the CMG helicase complex, composed of the mcm2-7 complex, the GINS complex and cdc45. Post-translationally, may be in a phosphorylated state in the mitotic mcm complex. Phosphorylated in the interphase mcm complex. Phosphorylated by the cdc7-dbf4 and cdc7-dbf4b complexes.

Its subcellular location is the nucleus. The protein resides in the chromosome. The enzyme catalyses ATP + H2O = ADP + phosphate + H(+). In terms of biological role, acts as a component of the MCM2-7 complex (MCM complex) which is the replicative helicase essential for 'once per cell cycle' DNA replication initiation and elongation in eukaryotic cells. Core component of CDC45-MCM-GINS (CMG) helicase, the molecular machine that unwinds template DNA during replication, and around which the replisome is built. The active ATPase sites in the MCM2-7 ring are formed through the interaction surfaces of two neighboring subunits such that a critical structure of a conserved arginine finger motif is provided in trans relative to the ATP-binding site of the Walker A box of the adjacent subunit. The six ATPase active sites, however, are likely to contribute differentially to the complex helicase activity. Required for the entry in S phase and for cell division. This is DNA replication licensing factor mcm2 (mcm2) from Xenopus laevis (African clawed frog).